The sequence spans 330 residues: Negative regulator of the PHO system (330 aa).

In terms of domain architecture, Protein kinase spans 8–290 (FQQLEKLGEG…ARQALQHPWF (283 aa)). ATP-binding positions include 14-22 (LGEGTYATV) and Lys37. Residue Asp131 is the Proton acceptor of the active site. The interval 300–330 (MQHLADPYQQSQQQSQQQAQQSQQMDPQTYR) is disordered. The span at 308–323 (QQSQQQSQQQAQQSQQ) shows a compositional bias: low complexity.

It belongs to the protein kinase superfamily. CMGC Ser/Thr protein kinase family. CDC2/CDKX subfamily. Interacts with a number of cyclins.

The catalysed reaction is L-seryl-[protein] + ATP = O-phospho-L-seryl-[protein] + ADP + H(+). It catalyses the reaction L-threonyl-[protein] + ATP = O-phospho-L-threonyl-[protein] + ADP + H(+). In terms of biological role, when phosphate concentrations are high it phosphorylates the PHO4 transcription factor thus establishing repression. The polypeptide is Negative regulator of the PHO system (PHO85) (Debaryomyces hansenii (strain ATCC 36239 / CBS 767 / BCRC 21394 / JCM 1990 / NBRC 0083 / IGC 2968) (Yeast)).